A 710-amino-acid chain; its full sequence is Cyclin-dependent kinase G-2 (710 aa).

Positions 1 to 350 (MAAGRHGGYR…ETPEPVKPPH (350 aa)) are disordered. The span at 8 to 30 (GYRDYEARERELDAEASRRSKEQ) shows a compositional bias: basic and acidic residues. A compositionally biased stretch (basic residues) spans 31-40 (QHHHHPSGRH). A compositionally biased stretch (basic and acidic residues) spans 41 to 64 (QRGDSDPRCEADRRRDGGRSRGGR). Positions 124-133 (SVVAASASSP) are enriched in low complexity. Residues 144-163 (WDRDSPKPMHSDVAKGKKAV) are compositionally biased toward basic and acidic residues. Residues 170 to 182 (LPLPPPPPLPPQD) show a composition bias toward pro residues. 2 stretches are compositionally biased toward basic and acidic residues: residues 183-195 (HIPE…KSPM) and 209-218 (LQEHAESRVM). The segment covering 299-308 (DENEDLEVDK) has biased composition (acidic residues). Positions 335 to 344 (YEVRRSETPE) are enriched in basic and acidic residues. Positions 365 to 656 (FERLNKINEG…ADAALQHEWF (292 aa)) constitute a Protein kinase domain. Residues 371–379 (INEGTYGVV) and lysine 394 each bind ATP. The residue at position 375 (threonine 375) is a Phosphothreonine. Tyrosine 376 is modified (phosphotyrosine). Aspartate 489 functions as the Proton acceptor in the catalytic mechanism. Serine 516 is modified (phosphoserine). Threonine 522 is modified (phosphothreonine).

The protein belongs to the protein kinase superfamily. CMGC Ser/Thr protein kinase family. CDC2/CDKX subfamily.

It carries out the reaction L-seryl-[protein] + ATP = O-phospho-L-seryl-[protein] + ADP + H(+). The enzyme catalyses L-threonyl-[protein] + ATP = O-phospho-L-threonyl-[protein] + ADP + H(+). The catalysed reaction is [DNA-directed RNA polymerase] + ATP = phospho-[DNA-directed RNA polymerase] + ADP + H(+). This chain is Cyclin-dependent kinase G-2 (CDKG-2), found in Oryza sativa subsp. indica (Rice).